Consider the following 210-residue polypeptide: Guanylate kinase (210 aa).

Positions 6–184 constitute a Guanylate kinase-like domain; it reads GNIYIVVAPS…ARLDLISIVR (179 aa). Residue 13–20 participates in ATP binding; it reads APSGAGKT.

Belongs to the guanylate kinase family.

Its subcellular location is the cytoplasm. The enzyme catalyses GMP + ATP = GDP + ADP. Functionally, essential for recycling GMP and indirectly, cGMP. This is Guanylate kinase from Chromobacterium violaceum (strain ATCC 12472 / DSM 30191 / JCM 1249 / CCUG 213 / NBRC 12614 / NCIMB 9131 / NCTC 9757 / MK).